The sequence spans 710 residues: Polyribonucleotide nucleotidyltransferase (710 aa).

Residues aspartate 501 and aspartate 507 each coordinate Mg(2+). Residues 568-628 (PKVQMFQIKP…ETVKQAILFI (61 aa)) enclose the KH domain. The S1 motif domain occupies 638–710 (NSIYHAHISR…RIDFVLISKK (73 aa)).

The protein belongs to the polyribonucleotide nucleotidyltransferase family. It depends on Mg(2+) as a cofactor.

It localises to the cytoplasm. The catalysed reaction is RNA(n+1) + phosphate = RNA(n) + a ribonucleoside 5'-diphosphate. Functionally, involved in mRNA degradation. Catalyzes the phosphorolysis of single-stranded polyribonucleotides processively in the 3'- to 5'-direction. This chain is Polyribonucleotide nucleotidyltransferase, found in Phytoplasma australiense.